Consider the following 102-residue polypeptide: NADH-quinone oxidoreductase subunit K (102 aa).

3 helical membrane-spanning segments follow: residues 6–26 (LEHG…GLMV), 30–50 (ILFV…AFIV), and 62–82 (VMFI…LAIL).

The protein belongs to the complex I subunit 4L family. As to quaternary structure, NDH-1 is composed of 13 different subunits. Subunits NuoA, H, J, K, L, M, N constitute the membrane sector of the complex.

It localises to the cell inner membrane. The enzyme catalyses a quinone + NADH + 5 H(+)(in) = a quinol + NAD(+) + 4 H(+)(out). NDH-1 shuttles electrons from NADH, via FMN and iron-sulfur (Fe-S) centers, to quinones in the respiratory chain. The immediate electron acceptor for the enzyme in this species is believed to be ubiquinone. Couples the redox reaction to proton translocation (for every two electrons transferred, four hydrogen ions are translocated across the cytoplasmic membrane), and thus conserves the redox energy in a proton gradient. The polypeptide is NADH-quinone oxidoreductase subunit K (Pseudomonas putida (strain W619)).